The primary structure comprises 290 residues: D-tagatose 3-epimerase (290 aa).

Cys-66 is a binding site for substrate. Catalysis depends on Glu-152, which acts as the Proton donor/acceptor. Glu-152 serves as a coordination point for Mn(2+). Substrate contacts are provided by residues Glu-158 and 185 to 188 (DTFH). Residues Asp-185 and His-211 each contribute to the Mn(2+) site. Arg-217 is a substrate binding site. Glu-246 serves as the catalytic Proton donor/acceptor. Glu-246 serves as a coordination point for Mn(2+).

The protein belongs to the hyi family. Homodimer. Mn(2+) serves as cofactor.

The enzyme catalyses keto-D-tagatose = keto-D-sorbose. It catalyses the reaction D-allulose = keto-D-fructose. It carries out the reaction D-ribulose = D-xylulose. Its activity is regulated as follows. Strongly inhibited (about 90% of the enzyme activity) by Ag(+), Hg(2+) and p-chloromercuribenzoic acid. Cu(2+) and Zn(2+) inhibit about 60% of the enzyme activity. Functionally, catalyzes the epimerization of various ketoses at the C(3) position. It is able to interconvert D-tagatose and D-ribulose to D-sorbose and D-xylulose, respectively. The enzyme is also able to accept other ketopentoses such as D-psicose with lower efficiency. This chain is D-tagatose 3-epimerase, found in Pseudomonas cichorii.